We begin with the raw amino-acid sequence, 120 residues long: MARISGVDLPKKKRIEYGLTYVYGIGLHASRKILDATGIDYNKRVYELNEDDIAAITKEIRASHVVEGDLRKQVAMDIKALMDLGSYRGLRHRRGLPCRGQKTKTNARTRKGKRKTVGAA.

Positions 93 to 120 (RRGLPCRGQKTKTNARTRKGKRKTVGAA) are disordered.

It belongs to the universal ribosomal protein uS13 family. In terms of assembly, part of the 30S ribosomal subunit. Forms a loose heterodimer with protein S19. Forms two bridges to the 50S subunit in the 70S ribosome.

Its function is as follows. Located at the top of the head of the 30S subunit, it contacts several helices of the 16S rRNA. In the 70S ribosome it contacts the 23S rRNA (bridge B1a) and protein L5 of the 50S subunit (bridge B1b), connecting the 2 subunits; these bridges are implicated in subunit movement. Contacts the tRNAs in the A and P-sites. The protein is Small ribosomal subunit protein uS13 of Sulfurimonas denitrificans (strain ATCC 33889 / DSM 1251) (Thiomicrospira denitrificans (strain ATCC 33889 / DSM 1251)).